Consider the following 299-residue polypeptide: Glycine--tRNA ligase alpha subunit (299 aa).

The protein belongs to the class-II aminoacyl-tRNA synthetase family. Tetramer of two alpha and two beta subunits.

The protein localises to the cytoplasm. The catalysed reaction is tRNA(Gly) + glycine + ATP = glycyl-tRNA(Gly) + AMP + diphosphate. The polypeptide is Glycine--tRNA ligase alpha subunit (Dictyoglomus turgidum (strain DSM 6724 / Z-1310)).